Consider the following 257-residue polypeptide: Pyrroline-5-carboxylate reductase (257 aa).

Belongs to the pyrroline-5-carboxylate reductase family.

It is found in the cytoplasm. It carries out the reaction L-proline + NADP(+) = (S)-1-pyrroline-5-carboxylate + NADPH + 2 H(+). The enzyme catalyses L-proline + NAD(+) = (S)-1-pyrroline-5-carboxylate + NADH + 2 H(+). It participates in amino-acid biosynthesis; L-proline biosynthesis; L-proline from L-glutamate 5-semialdehyde: step 1/1. Its function is as follows. Catalyzes the reduction of 1-pyrroline-5-carboxylate (PCA) to L-proline. The sequence is that of Pyrroline-5-carboxylate reductase from Helicobacter pylori (strain J99 / ATCC 700824) (Campylobacter pylori J99).